A 51-amino-acid chain; its full sequence is UPF0181 protein HAPS_0710 (51 aa).

The protein belongs to the UPF0181 family.

The chain is UPF0181 protein HAPS_0710 from Glaesserella parasuis serovar 5 (strain SH0165) (Haemophilus parasuis).